A 377-amino-acid chain; its full sequence is MLISARRLRRCQSLQLLASCFVLSLMALLVQEDNSLVNHVKSYSYRYLINSYNFVNDSLSVPRDRSDGAAGYRYLINNRHKCLNEDVLLLLFVKTAPENRRRRNAIRKTWGNEDYIRSRYAANIKVVFALGVERDPVKSHHTQQDLVNENKRFKDLIQQDFSDTFHNLTLKLLLQFGWVNSFCPSAKFIMSADDDIFVHTPNLVTYLKSLPIETQDFWIGRVHRGSPPIRSKASKYYVPYEMYPWSSYPDYTAGAAYVVSRDVAAKVYEASQTLNTSLYIDDVFMGICANKMGVVPQYHVYFSGEGKSPYHPCIYNKMMTSHGHLGDLDYLWRQATDSNVKSLSSGFLGNVYCKIVNIMLLCKIGYVDTYPCSAAWS.

Over 1 to 13 (MLISARRLRRCQS) the chain is Cytoplasmic. A helical; Signal-anchor for type II membrane protein membrane pass occupies residues 14–30 (LQLLASCFVLSLMALLV). The Lumenal portion of the chain corresponds to 31–377 (QEDNSLVNHV…DTYPCSAAWS (347 aa)). Asparagine 56, asparagine 167, and asparagine 275 each carry an N-linked (GlcNAc...) asparagine glycan.

It belongs to the glycosyltransferase 31 family.

The protein localises to the golgi apparatus membrane. The catalysed reaction is a beta-D-Gal-(1-&gt;4)-beta-D-Glc-(1&lt;-&gt;1)-Cer(d18:1(4E)) + UDP-N-acetyl-alpha-D-glucosamine = a beta-D-GlcNAc-(1-&gt;3)-beta-D-Gal-(1-&gt;4)-beta-D-Glc-(1&lt;-&gt;1)-Cer(d18:1(4E)) + UDP + H(+). It catalyses the reaction a neolactoside nLc4Cer(d18:1(4E)) + UDP-N-acetyl-alpha-D-glucosamine = a neolactoside IV(3)-beta-GlcNAc-nLc4Cer(d18:1(4E)) + UDP + H(+). Its pathway is protein modification; protein glycosylation. Beta-1,3-N-acetylglucosaminyltransferase that plays a key role in the synthesis of lacto- or neolacto-series carbohydrate chains on glycolipids. The polypeptide is Lactosylceramide 1,3-N-acetyl-beta-D-glucosaminyltransferase B (b3gnt5-b) (Xenopus laevis (African clawed frog)).